The following is a 63-amino-acid chain: Ferredoxin (63 aa).

The 4Fe-4S ferredoxin-type domain occupies 2–29 (KVTVDQDLCIACGTCIDLCPSVFDWDDE). [4Fe-4S] cluster-binding residues include Cys10, Cys13, Cys16, and Cys55.

Requires [4Fe-4S] cluster as cofactor.

Functionally, ferredoxins are iron-sulfur proteins that transfer electrons in a wide variety of metabolic reactions. The polypeptide is Ferredoxin (Moorella thermoacetica (Clostridium thermoaceticum)).